A 336-amino-acid chain; its full sequence is Aspartate--ammonia ligase (336 aa).

The protein belongs to the class-II aminoacyl-tRNA synthetase family. AsnA subfamily.

Its subcellular location is the cytoplasm. It catalyses the reaction L-aspartate + NH4(+) + ATP = L-asparagine + AMP + diphosphate + H(+). It functions in the pathway amino-acid biosynthesis; L-asparagine biosynthesis; L-asparagine from L-aspartate (ammonia route): step 1/1. This is Aspartate--ammonia ligase from Clostridium perfringens (strain ATCC 13124 / DSM 756 / JCM 1290 / NCIMB 6125 / NCTC 8237 / Type A).